We begin with the raw amino-acid sequence, 219 residues long: 7-methyl-GTP pyrophosphatase (219 aa).

Asp-89 serves as the catalytic Proton acceptor.

Belongs to the Maf family. YceF subfamily. A divalent metal cation is required as a cofactor.

The protein resides in the cytoplasm. It catalyses the reaction N(7)-methyl-GTP + H2O = N(7)-methyl-GMP + diphosphate + H(+). Its function is as follows. Nucleoside triphosphate pyrophosphatase that hydrolyzes 7-methyl-GTP (m(7)GTP). May have a dual role in cell division arrest and in preventing the incorporation of modified nucleotides into cellular nucleic acids. The protein is 7-methyl-GTP pyrophosphatase of Polaromonas sp. (strain JS666 / ATCC BAA-500).